We begin with the raw amino-acid sequence, 621 residues long: Elongation factor 4 (621 aa).

The tr-type G domain maps to 21-203 (DLIRNICIIA…AIVKRVPPPK (183 aa)). GTP is bound by residues 33–38 (DHGKTT) and 150–153 (NKID).

It belongs to the TRAFAC class translation factor GTPase superfamily. Classic translation factor GTPase family. LepA subfamily.

The protein resides in the cell inner membrane. It carries out the reaction GTP + H2O = GDP + phosphate + H(+). Functionally, required for accurate and efficient protein synthesis under certain stress conditions. May act as a fidelity factor of the translation reaction, by catalyzing a one-codon backward translocation of tRNAs on improperly translocated ribosomes. Back-translocation proceeds from a post-translocation (POST) complex to a pre-translocation (PRE) complex, thus giving elongation factor G a second chance to translocate the tRNAs correctly. Binds to ribosomes in a GTP-dependent manner. The polypeptide is Elongation factor 4 (Thermotoga maritima (strain ATCC 43589 / DSM 3109 / JCM 10099 / NBRC 100826 / MSB8)).